A 402-amino-acid chain; its full sequence is Cytochrome b561 and DOMON domain-containing protein At4g17280 (402 aa).

The first 31 residues, 1 to 31 (MSNHMSIMKFLNQILCLSLILSISMTTLSFA), serve as a signal peptide directing secretion. A DOMON domain is found at 54 to 171 (LDSFLHYTYE…GTINTVWQDG (118 aa)). The 197-residue stretch at 183 to 379 (TSGNNVRSVS…LEAFTWYVVI (197 aa)) folds into the Cytochrome b561 domain. Transmembrane regions (helical) follow at residues 218–238 (IHGILNGVSWGIMMPLGAIIA) and 250–270 (AWFYIHVFCQASAYIIGVAGW). Heme b is bound by residues histidine 219, histidine 255, and histidine 288. The helical transmembrane segment at 290 to 310 (AIGIALFSLATVQVFAMFLRP) threads the bilayer. Heme b is bound at residue histidine 324. The next 2 membrane-spanning stretches (helical) occupy residues 326–346 (TIGYTIIILGVVNVFKGLGIL) and 359–379 (IIVVLAIVATLLEAFTWYVVI).

The cofactor is heme b.

It localises to the membrane. May act as a catecholamine-responsive trans-membrane electron transporter. The protein is Cytochrome b561 and DOMON domain-containing protein At4g17280 of Arabidopsis thaliana (Mouse-ear cress).